The sequence spans 279 residues: uncharacterized protein (279 aa).

A Reverse transcriptase domain is found at 1 to 87; it reads MRVNGRNLTN…DEYIYLGRQI (87 aa).

This is an uncharacterized protein from Caenorhabditis elegans.